Consider the following 322-residue polypeptide: Thioredoxin reductase (322 aa).

Residues 11–14, 40–41, Gln45, Asn54, Val87, and Cys145 contribute to the FAD site; these read SGPA and IA. Cys142 and Cys145 are disulfide-bonded. Position 192 is a phosphoserine (Ser192). Residue Thr278 is modified to Phosphothreonine. Position 279 is a phosphoserine (Ser279). FAD is bound by residues Asp288 and 295-297; that span reads RQA.

The protein belongs to the class-II pyridine nucleotide-disulfide oxidoreductase family. As to quaternary structure, homodimer. It depends on FAD as a cofactor.

It localises to the cytoplasm. It carries out the reaction [thioredoxin]-dithiol + NADP(+) = [thioredoxin]-disulfide + NADPH + H(+). The sequence is that of Thioredoxin reductase (trr1) from Schizosaccharomyces pombe (strain 972 / ATCC 24843) (Fission yeast).